We begin with the raw amino-acid sequence, 239 residues long: MKPVILATASALLLAACQTNSYDSLAYGPTLTPVGQGLEAGRMPVPQPFQQAKERTFRSAYNLNSQSMYRALRAAAVGDVIRITIDIDDKAQLDNNTNRSRKSASDVGFASALNLSGFQSGSTSGSASGNLGLTGDTSTDGKGKIDRSEKLRLSLAAVVTEVMPNGNLVINGSQEILVNYEVRVLTLGGIVNPLDVTSNNTVAYDKVAEARISYAGRGRLNDVQQPAWGQRLFDAVNPM.

Residues methionine 1–alanine 16 form the signal peptide. Cysteine 17 carries N-palmitoyl cysteine lipidation. Residue cysteine 17 is the site of S-diacylglycerol cysteine attachment. Positions serine 120–serine 138 are enriched in polar residues. Positions serine 120 to isoleucine 145 are disordered.

This sequence belongs to the FlgH family. The basal body constitutes a major portion of the flagellar organelle and consists of four rings (L,P,S, and M) mounted on a central rod.

It localises to the cell outer membrane. It is found in the bacterial flagellum basal body. Functionally, assembles around the rod to form the L-ring and probably protects the motor/basal body from shearing forces during rotation. The sequence is that of Flagellar L-ring protein from Azorhizobium caulinodans (strain ATCC 43989 / DSM 5975 / JCM 20966 / LMG 6465 / NBRC 14845 / NCIMB 13405 / ORS 571).